Consider the following 179-residue polypeptide: Ribosome maturation factor RimM (179 aa).

The 80-residue stretch at 96–175 folds into the PRC barrel domain; sequence KDEYFWFDIE…IITVIGAMDI (80 aa).

It belongs to the RimM family. Binds ribosomal protein uS19.

Its subcellular location is the cytoplasm. Its function is as follows. An accessory protein needed during the final step in the assembly of 30S ribosomal subunit, possibly for assembly of the head region. Essential for efficient processing of 16S rRNA. May be needed both before and after RbfA during the maturation of 16S rRNA. It has affinity for free ribosomal 30S subunits but not for 70S ribosomes. In Sulfurimonas denitrificans (strain ATCC 33889 / DSM 1251) (Thiomicrospira denitrificans (strain ATCC 33889 / DSM 1251)), this protein is Ribosome maturation factor RimM.